A 255-amino-acid chain; its full sequence is MGKTNVSHKLYITLLAGGMGKRMQSNLPKVLHKVNGETMIVRLMKQVIKLNPDKILVVVGKFYSEISSEIKQHINDNRIEFVVQKEPLGTGDAVKCTLPLLINDNIDNIILNGDVPMIQHSTIKNIYNYYLETKSKLLITSIHLSNPTGCGRIILDENFGFSEIIEEKDCTEDQKKLTLVNCGIYVCNSKILKQSIPQISNNNSQKEYYLTDLVKIYNNEPSNNINLFILPRNKEIEIYNINTKEQLEYIESVSK.

The enzyme catalyses N-acetyl-alpha-D-glucosamine 1-phosphate + UTP + H(+) = UDP-N-acetyl-alpha-D-glucosamine + diphosphate. It participates in nucleotide-sugar biosynthesis; UDP-N-acetyl-alpha-D-glucosamine biosynthesis; UDP-N-acetyl-alpha-D-glucosamine from N-acetyl-alpha-D-glucosamine 1-phosphate: step 1/1. The polypeptide is Probable UDP-N-acetylglucosamine pyrophosphorylase (Acanthamoeba polyphaga (Amoeba)).